Consider the following 435-residue polypeptide: Dual specificity protein kinase FUZ7 (435 aa).

Residues 1 to 61 (MLSSGAGSSI…TIGKSSAVTP (61 aa)) are disordered. The segment covering 46–59 (AASNASTIGKSSAV) has biased composition (polar residues). The 309-residue stretch at 109-417 (LKTLSELGAG…PKDLTKHQYV (309 aa)) folds into the Protein kinase domain. ATP-binding positions include 115-123 (LGAGNGGTV) and Lys138. Residue Asp231 is the Proton acceptor of the active site. The interval 307 to 359 (NEEDDDSDADNNYTNEDLAGTLSPTKPAPMISLGQNEKQRRRKSKPAGVSLEG) is disordered.

It belongs to the protein kinase superfamily. STE Ser/Thr protein kinase family. MAP kinase kinase subfamily.

The catalysed reaction is L-seryl-[protein] + ATP = O-phospho-L-seryl-[protein] + ADP + H(+). It carries out the reaction L-threonyl-[protein] + ATP = O-phospho-L-threonyl-[protein] + ADP + H(+). The enzyme catalyses L-tyrosyl-[protein] + ATP = O-phospho-L-tyrosyl-[protein] + ADP + H(+). Functionally, protein kinase that is necessary for a-locus-dependent processes, such as conjugation tube formation, filament formation, and maintenance of filamentous growth, and for a-locus-independent processes, such as tumor induction and teliospore germination. This Mycosarcoma maydis (Corn smut fungus) protein is Dual specificity protein kinase FUZ7 (FUZ7).